A 434-amino-acid chain; its full sequence is 26S proteasome regulatory subunit 6A (434 aa).

Position 2 is an N-acetylalanine (Ala2). The residue at position 180 (Tyr180) is a Phosphotyrosine. 222–229 is a binding site for ATP; that stretch reads GPPGTGKT.

It belongs to the AAA ATPase family. Post-translationally, N-acetylated by NAT1.

The protein localises to the cytoplasm. It is found in the nucleus. Functionally, the 26S proteasome is involved in the ATP-dependent degradation of ubiquitinated proteins. The regulatory (or ATPase) complex confers ATP dependency and substrate specificity to the 26S complex. This is 26S proteasome regulatory subunit 6A (RPT5) from Saccharomyces cerevisiae (strain ATCC 204508 / S288c) (Baker's yeast).